The sequence spans 91 residues: Acylphosphatase (91 aa).

Positions 5 to 91 (RLHAIVEGEV…KGEFTSFDTY (87 aa)) constitute an Acylphosphatase-like domain. Active-site residues include arginine 20 and asparagine 38.

The protein belongs to the acylphosphatase family.

It carries out the reaction an acyl phosphate + H2O = a carboxylate + phosphate + H(+). This Metallosphaera sedula (strain ATCC 51363 / DSM 5348 / JCM 9185 / NBRC 15509 / TH2) protein is Acylphosphatase (acyP).